The chain runs to 140 residues: Nucleoside diphosphate kinase (140 aa).

Lys-11, Phe-59, Arg-87, Thr-93, Arg-104, and Asn-114 together coordinate ATP. Residue His-117 is the Pros-phosphohistidine intermediate of the active site.

It belongs to the NDK family. Homotetramer. Mg(2+) is required as a cofactor.

The protein localises to the cytoplasm. It carries out the reaction a 2'-deoxyribonucleoside 5'-diphosphate + ATP = a 2'-deoxyribonucleoside 5'-triphosphate + ADP. The catalysed reaction is a ribonucleoside 5'-diphosphate + ATP = a ribonucleoside 5'-triphosphate + ADP. Functionally, major role in the synthesis of nucleoside triphosphates other than ATP. The ATP gamma phosphate is transferred to the NDP beta phosphate via a ping-pong mechanism, using a phosphorylated active-site intermediate. The chain is Nucleoside diphosphate kinase from Rhizobium etli (strain CIAT 652).